Here is a 366-residue protein sequence, read N- to C-terminus: Nitronate monooxygenase (366 aa).

FMN contacts are provided by residues N74, Q181, G186, G223, and 242–245 (QLGT).

The protein belongs to the nitronate monooxygenase family. NMO class I subfamily. FMN serves as cofactor.

It catalyses the reaction 3 propionate 3-nitronate + 3 O2 + H2O = 3 3-oxopropanoate + 2 nitrate + nitrite + H2O2 + 3 H(+). Functionally, nitronate monooxygenase that uses molecular oxygen to catalyze the oxidative denitrification of alkyl nitronates. Acts on propionate 3-nitronate (P3N), the presumed physiological substrate. Is likely involved in the degradation of P3N, that allows B.phytofirmans PsJN to grow on 3-nitropropionate/P3N as the sole source of nitrogen and carbon. Also probably functions in the detoxification of P3N, a metabolic poison produced by plants and fungi as a defense mechanism. Cannot oxidize nitroalkanes such as 3-nitropropionate, nitroethane, or 1-nitropropane. The sequence is that of Nitronate monooxygenase from Paraburkholderia phytofirmans (strain DSM 17436 / LMG 22146 / PsJN) (Burkholderia phytofirmans).